The chain runs to 290 residues: 6-carboxyhexanoate--CoA ligase (290 aa).

This sequence belongs to the BioW family. Homodimer. The cofactor is Mg(2+).

It carries out the reaction heptanedioate + ATP + CoA = 6-carboxyhexanoyl-CoA + AMP + diphosphate. Its pathway is metabolic intermediate metabolism; pimeloyl-CoA biosynthesis; pimeloyl-CoA from pimelate: step 1/1. Its function is as follows. Catalyzes the transformation of pimelate into pimeloyl-CoA with concomitant hydrolysis of ATP to AMP. The protein is 6-carboxyhexanoate--CoA ligase of Bacillus amyloliquefaciens (Bacillus velezensis).